Here is a 239-residue protein sequence, read N- to C-terminus: Sugar fermentation stimulation protein homolog (239 aa).

This sequence belongs to the SfsA family.

This Mannheimia succiniciproducens (strain KCTC 0769BP / MBEL55E) protein is Sugar fermentation stimulation protein homolog.